A 327-amino-acid chain; its full sequence is Spermidine/putrescine import ATP-binding protein PotA (327 aa).

The ABC transporter domain maps to 5-235 (IKVEAVEKHF…PKTLFVATFI (231 aa)). 37–44 (GPSGCGKT) lines the ATP pocket.

This sequence belongs to the ABC transporter superfamily. Spermidine/putrescine importer (TC 3.A.1.11.1) family. As to quaternary structure, the complex is composed of two ATP-binding proteins (PotA), two transmembrane proteins (PotB and PotC) and a solute-binding protein (PotD).

It localises to the cell membrane. It carries out the reaction ATP + H2O + polyamine-[polyamine-binding protein]Side 1 = ADP + phosphate + polyamineSide 2 + [polyamine-binding protein]Side 1.. Part of the ABC transporter complex PotABCD involved in spermidine/putrescine import. Responsible for energy coupling to the transport system. The protein is Spermidine/putrescine import ATP-binding protein PotA of Bacillus cereus (strain ATCC 14579 / DSM 31 / CCUG 7414 / JCM 2152 / NBRC 15305 / NCIMB 9373 / NCTC 2599 / NRRL B-3711).